The sequence spans 342 residues: Predicted GPI-anchored protein 54 (342 aa).

The N-terminal stretch at 1–16 (MRANYLLLLAATAVQA) is a signal peptide. N-linked (GlcNAc...) asparagine glycosylation is found at N25, N105, and N151. G314 is lipidated: GPI-anchor amidated glycine. Residues 315 to 342 (ASQSHPISSYSNYTISDYAPPISSYYSL) constitute a propeptide, removed in mature form. Residue N326 is glycosylated (N-linked (GlcNAc...) asparagine).

It localises to the cell membrane. The chain is Predicted GPI-anchored protein 54 (PGA54) from Candida albicans (strain SC5314 / ATCC MYA-2876) (Yeast).